Consider the following 131-residue polypeptide: MTTKRKAYVRPMPSTWWKKLPFYRFYMLREGTAVPAVWFSLELMYGVFALKHGPETWADFVGFLQNPVVLILNLIVLAAALLHTKTWFELAPKAANIIVKGEKMGPEPVIKGLWAVTAVVTAVVLFVALFW.

2 helical membrane passes run 60–80 (FVGF…LAAA) and 110–130 (IKGL…VALF).

It belongs to the FrdC family. In terms of assembly, part of an enzyme complex containing four subunits: a flavoprotein (FrdA), an iron-sulfur protein (FrdB), and two hydrophobic anchor proteins (FrdC and FrdD).

The protein resides in the cell inner membrane. Functionally, two distinct, membrane-bound, FAD-containing enzymes are responsible for the catalysis of fumarate and succinate interconversion; fumarate reductase is used in anaerobic growth, and succinate dehydrogenase is used in aerobic growth. Anchors the catalytic components of the fumarate reductase complex to the cell inner membrane, binds quinones. The chain is Fumarate reductase subunit C from Enterobacter sp. (strain 638).